The sequence spans 89 residues: MAHKKAGGSSRNGRDSAGRRLGIKKYGGESVIAGNIIARQRGNKWWPGEGVGEGKDHTIYAVADGHVSFKKGFKGRTFISVLPAAEAAE.

A disordered region spans residues 1 to 20; that stretch reads MAHKKAGGSSRNGRDSAGRR.

The protein belongs to the bacterial ribosomal protein bL27 family.

In Jannaschia sp. (strain CCS1), this protein is Large ribosomal subunit protein bL27.